The chain runs to 398 residues: Trans-2-enoyl-CoA reductase [NADH] (398 aa).

NAD(+)-binding positions include 47–52 (GASSGF), 74–75 (YE), 111–112 (DA), and 139–140 (LA). Tyrosine 225 is a binding site for substrate. Tyrosine 235 acts as the Proton donor in catalysis. NAD(+) contacts are provided by residues lysine 244 and 274 to 276 (LVT).

Belongs to the TER reductase family. As to quaternary structure, monomer.

The catalysed reaction is a 2,3-saturated acyl-CoA + NAD(+) = a (2E)-enoyl-CoA + NADH + H(+). Its pathway is lipid metabolism; fatty acid biosynthesis. Involved in the fatty acid synthesis (FAS II). Catalyzes the reduction of the carbon-carbon double bond of crotonyl-CoA to yield butyryl-CoA. In Clostridium acetobutylicum (strain ATCC 824 / DSM 792 / JCM 1419 / IAM 19013 / LMG 5710 / NBRC 13948 / NRRL B-527 / VKM B-1787 / 2291 / W), this protein is Trans-2-enoyl-CoA reductase [NADH].